Reading from the N-terminus, the 186-residue chain is ATP synthase subunit delta (186 aa).

This sequence belongs to the ATPase delta chain family. In terms of assembly, F-type ATPases have 2 components, F(1) - the catalytic core - and F(0) - the membrane proton channel. F(1) has five subunits: alpha(3), beta(3), gamma(1), delta(1), epsilon(1). F(0) has three main subunits: a(1), b(2) and c(10-14). The alpha and beta chains form an alternating ring which encloses part of the gamma chain. F(1) is attached to F(0) by a central stalk formed by the gamma and epsilon chains, while a peripheral stalk is formed by the delta and b chains.

The protein localises to the cell membrane. In terms of biological role, f(1)F(0) ATP synthase produces ATP from ADP in the presence of a proton or sodium gradient. F-type ATPases consist of two structural domains, F(1) containing the extramembraneous catalytic core and F(0) containing the membrane proton channel, linked together by a central stalk and a peripheral stalk. During catalysis, ATP synthesis in the catalytic domain of F(1) is coupled via a rotary mechanism of the central stalk subunits to proton translocation. Functionally, this protein is part of the stalk that links CF(0) to CF(1). It either transmits conformational changes from CF(0) to CF(1) or is implicated in proton conduction. The protein is ATP synthase subunit delta of Wolbachia pipientis wMel.